An 84-amino-acid polypeptide reads, in one-letter code: U2-theraphotoxin-Cg1b 1 (84 aa).

Positions 1–21 (MKVSVLITLAVWGVMFLLTSA) are cleaved as a signal peptide. A propeptide spanning residues 22 to 48 (QERGSDQMDSPAWLKSMERIFQSEERE) is cleaved from the precursor. Intrachain disulfides connect cysteine 49–cysteine 63, cysteine 56–cysteine 68, and cysteine 62–cysteine 76.

The protein belongs to the neurotoxin 10 (Hwtx-1) family. 06 (F4b) subfamily. As to expression, expressed by the venom gland.

It localises to the secreted. In terms of biological role, probable ion channel inhibitor. The chain is U2-theraphotoxin-Cg1b 1 from Chilobrachys guangxiensis (Chinese earth tiger tarantula).